We begin with the raw amino-acid sequence, 720 residues long: ABC transporter G family member STR2 (720 aa).

Residues 1–467 lie on the Cytoplasmic side of the membrane; it reads MRHANGRRGD…NFINIRRTPE (467 aa). Residues 25–274 enclose the ABC transporter domain; the sequence is LEFSNLTYTV…LGRMGRKVPK (250 aa). 70 to 77 is an ATP binding site; it reads GPSGAGKS. A disordered region spans residues 313–346; sequence GAHEMSIVPPSPAPSHREGRGHDRSNKRLHLKDQ. Positions 327-346 are enriched in basic and acidic residues; the sequence is SHREGRGHDRSNKRLHLKDQ. The helical transmembrane segment at 468–488 threads the bilayer; it reads LFLSRLVVLTVMGIMMATMFM. Topologically, residues 489-502 are extracellular; the sequence is HPKKNLQGITNRLS. Residues 503 to 523 form a helical membrane-spanning segment; that stretch reads FFIFTVCLFFFSSNDAVPAFI. Topologically, residues 524-547 are cytoplasmic; it reads QERFIFVRETSHNKYRASSYTIAG. The helical transmembrane segment at 548-568 threads the bilayer; sequence LITYLPFLAVQAAVYAVIVWF. Over 569-575 the chain is Extracellular; sequence ALSLRGP. The helical transmembrane segment at 576–596 threads the bilayer; the sequence is FIYFLIVLYMSLLSTNSFVVF. At 597 to 604 the chain is on the cytoplasmic side; it reads VSSVVPNY. A helical transmembrane segment spans residues 605-625; that stretch reads ILGYAAVIAFTALFFLFCGYF. Residues 626-693 lie on the Extracellular side of the membrane; that stretch reads LNSHDMPQYW…QVESKKWEKV (68 aa). Residue asparagine 681 is glycosylated (N-linked (GlcNAc...) asparagine). The chain crosses the membrane as a helical span at residues 694 to 714; sequence YIMLAWAIVYRILFYIVLRFF. The Cytoplasmic portion of the chain corresponds to 715 to 720; that stretch reads SKNQRT.

It belongs to the ABC transporter superfamily. ABCG family. Stunted arbuscule (STR) subfamily. Heterodimerizes with STR; the resulting transporter is located in the peri-arbuscular membrane.

It localises to the cell membrane. Together with STR, required for arbuscule development in arbuscular mycorrhizal (AM) symbiosis. This is ABC transporter G family member STR2 from Petunia hybrida (Petunia).